Here is a 295-residue protein sequence, read N- to C-terminus: Ribosomal protein L11 methyltransferase (295 aa).

4 residues coordinate S-adenosyl-L-methionine: Thr145, Gly166, Asp188, and Asn230.

Belongs to the methyltransferase superfamily. PrmA family.

It is found in the cytoplasm. The catalysed reaction is L-lysyl-[protein] + 3 S-adenosyl-L-methionine = N(6),N(6),N(6)-trimethyl-L-lysyl-[protein] + 3 S-adenosyl-L-homocysteine + 3 H(+). Methylates ribosomal protein L11. In Shewanella amazonensis (strain ATCC BAA-1098 / SB2B), this protein is Ribosomal protein L11 methyltransferase.